Consider the following 189-residue polypeptide: Prostaglandin-H2 D-isomerase (189 aa).

The N-terminal stretch at M1–A24 is a signal peptide. A Pyrrolidone carboxylic acid modification is found at Q25. An N-linked (GlcNAc...) asparagine glycan is attached at N51. The active-site Nucleophile is the C65. N78 is a glycosylation site (N-linked (GlcNAc...) asparagine). C89 and C186 are joined by a disulfide.

Belongs to the calycin superfamily. Lipocalin family. As to quaternary structure, monomer. In terms of tissue distribution, abundant in the brain and CNS, where it is expressed in tissues of the blood-brain barrier and secreted into the cerebro-spinal fluid. In the male reproductive system, it is expressed in the testis, efferent ducts and epididymis, and is secreted into the seminal fluid. In the eye, it is expressed in the pigmented epithelium of the retina and the nonpigmented epithelium of the ciliary body, and secreted into the aqueous humor. Low levels detected in various tissue fluids such as serum, normal urine, ascitic fluid and tear fluid. Also found in a number of other organs including the ear, heart and lung.

The protein resides in the rough endoplasmic reticulum. It localises to the nucleus membrane. The protein localises to the golgi apparatus. It is found in the cytoplasm. Its subcellular location is the perinuclear region. The protein resides in the secreted. The enzyme catalyses prostaglandin H2 = prostaglandin D2. Catalyzes the conversion of PGH2 to PGD2, a prostaglandin involved in smooth muscle contraction/relaxation and a potent inhibitor of platelet aggregation. Involved in a variety of CNS functions, such as sedation, NREM sleep and PGE2-induced allodynia, and may have an anti-apoptotic role in oligodendrocytes. Binds small non-substrate lipophilic molecules, including biliverdin, bilirubin, retinal, retinoic acid and thyroid hormone, and may act as a scavenger for harmful hydrophobic molecules and as a secretory retinoid and thyroid hormone transporter. Possibly involved in development and maintenance of the blood-brain, blood-retina, blood-aqueous humor and blood-testis barrier. It is likely to play important roles in both maturation and maintenance of the central nervous system and male reproductive system. Involved in PLA2G3-dependent maturation of mast cells. PLA2G3 is secreted by immature mast cells and acts on nearby fibroblasts upstream to PTDGS to synthesize PGD2, which in turn promotes mast cell maturation and degranulation via PTGDR. The polypeptide is Prostaglandin-H2 D-isomerase (Ptgds) (Mus musculus (Mouse)).